Here is a 316-residue protein sequence, read N- to C-terminus: tRNA dimethylallyltransferase (316 aa).

Residue 13 to 20 coordinates ATP; sequence GPTASGKT. Residue 15–20 coordinates substrate; that stretch reads TASGKT. Interaction with substrate tRNA regions lie at residues 38 to 41, 162 to 166, 243 to 248, and 276 to 283; these read DSAL, QRINR, RCVGYR, and KRQITWLR.

The protein belongs to the IPP transferase family. As to quaternary structure, monomer. Mg(2+) is required as a cofactor.

It catalyses the reaction adenosine(37) in tRNA + dimethylallyl diphosphate = N(6)-dimethylallyladenosine(37) in tRNA + diphosphate. Catalyzes the transfer of a dimethylallyl group onto the adenine at position 37 in tRNAs that read codons beginning with uridine, leading to the formation of N6-(dimethylallyl)adenosine (i(6)A). This Pasteurella multocida (strain Pm70) protein is tRNA dimethylallyltransferase.